Consider the following 155-residue polypeptide: Protein-export protein SecB (155 aa).

Belongs to the SecB family. In terms of assembly, homotetramer, a dimer of dimers. One homotetramer interacts with 1 SecA dimer.

It localises to the cytoplasm. Its function is as follows. One of the proteins required for the normal export of preproteins out of the cell cytoplasm. It is a molecular chaperone that binds to a subset of precursor proteins, maintaining them in a translocation-competent state. It also specifically binds to its receptor SecA. The protein is Protein-export protein SecB of Citrobacter koseri (strain ATCC BAA-895 / CDC 4225-83 / SGSC4696).